The chain runs to 84 residues: Large ribosomal subunit protein bL27 (84 aa).

The tract at residues methionine 1–lysine 24 is disordered.

It belongs to the bacterial ribosomal protein bL27 family.

The protein is Large ribosomal subunit protein bL27 of Leptospira borgpetersenii serovar Hardjo-bovis (strain JB197).